A 465-amino-acid chain; its full sequence is Glutamate--tRNA ligase (465 aa).

The short motif at 11–21 (PSPTGYLHIGG) is the 'HIGH' region element. The 'KMSKS' region signature appears at 243–247 (KLSKR). K246 contributes to the ATP binding site.

This sequence belongs to the class-I aminoacyl-tRNA synthetase family. Glutamate--tRNA ligase type 1 subfamily. As to quaternary structure, monomer.

The protein localises to the cytoplasm. It catalyses the reaction tRNA(Glu) + L-glutamate + ATP = L-glutamyl-tRNA(Glu) + AMP + diphosphate. Its function is as follows. Catalyzes the attachment of glutamate to tRNA(Glu) in a two-step reaction: glutamate is first activated by ATP to form Glu-AMP and then transferred to the acceptor end of tRNA(Glu). The sequence is that of Glutamate--tRNA ligase from Aromatoleum aromaticum (strain DSM 19018 / LMG 30748 / EbN1) (Azoarcus sp. (strain EbN1)).